The sequence spans 176 residues: Large ribosomal subunit protein bL12m (176 aa).

This sequence belongs to the bacterial ribosomal protein bL12 family. Component of the mitochondrial large ribosomal subunit (mt-LSU). Mature N.crassa 74S mitochondrial ribosomes consist of a small (37S) and a large (54S) subunit. The 37S small subunit contains a 16S ribosomal RNA (16S mt-rRNA) and 32 different proteins. The 54S large subunit contains a 23S rRNA (23S mt-rRNA) and 42 different proteins.

The protein localises to the mitochondrion. In terms of biological role, component of the mitochondrial ribosome (mitoribosome), a dedicated translation machinery responsible for the synthesis of mitochondrial genome-encoded proteins, including at least some of the essential transmembrane subunits of the mitochondrial respiratory chain. The mitoribosomes are attached to the mitochondrial inner membrane and translation products are cotranslationally integrated into the membrane. This chain is Large ribosomal subunit protein bL12m (mrpl12), found in Neurospora crassa (strain ATCC 24698 / 74-OR23-1A / CBS 708.71 / DSM 1257 / FGSC 987).